The chain runs to 106 residues: UPF0642 protein YBL028C (106 aa).

Residues 1 to 12 (MAKSLRASSHLN) show a composition bias toward polar residues. 2 disordered regions span residues 1 to 21 (MAKSLRASSHLNAKSVKRRGV) and 52 to 106 (KEEQ…FTRF). Over residues 62–72 (DEKKSNEEAPR) the composition is skewed to basic and acidic residues. The span at 83–106 (GRHHTYKKAKLMKQSKKKTSFTRF) shows a compositional bias: basic residues.

The protein belongs to the UPF0642 family.

The chain is UPF0642 protein YBL028C from Saccharomyces cerevisiae (strain ATCC 204508 / S288c) (Baker's yeast).